We begin with the raw amino-acid sequence, 111 residues long: Large ribosomal subunit protein uL22 (111 aa).

Belongs to the universal ribosomal protein uL22 family. In terms of assembly, part of the 50S ribosomal subunit.

Its function is as follows. This protein binds specifically to 23S rRNA; its binding is stimulated by other ribosomal proteins, e.g. L4, L17, and L20. It is important during the early stages of 50S assembly. It makes multiple contacts with different domains of the 23S rRNA in the assembled 50S subunit and ribosome. In terms of biological role, the globular domain of the protein is located near the polypeptide exit tunnel on the outside of the subunit, while an extended beta-hairpin is found that lines the wall of the exit tunnel in the center of the 70S ribosome. The sequence is that of Large ribosomal subunit protein uL22 from Chlamydia abortus (strain DSM 27085 / S26/3) (Chlamydophila abortus).